Here is a 344-residue protein sequence, read N- to C-terminus: Phosphate acyltransferase (344 aa).

It belongs to the PlsX family. In terms of assembly, homodimer. Probably interacts with PlsY.

The protein localises to the cytoplasm. The catalysed reaction is a fatty acyl-[ACP] + phosphate = an acyl phosphate + holo-[ACP]. The protein operates within lipid metabolism; phospholipid metabolism. In terms of biological role, catalyzes the reversible formation of acyl-phosphate (acyl-PO(4)) from acyl-[acyl-carrier-protein] (acyl-ACP). This enzyme utilizes acyl-ACP as fatty acyl donor, but not acyl-CoA. This is Phosphate acyltransferase from Actinobacillus pleuropneumoniae serotype 5b (strain L20).